Consider the following 402-residue polypeptide: MQVLTNTKFETVAFQWPAGFYSDGIHIGLRRHKKDFGWLFSKVPASAAGTYTTNQFQAAPTKLTKQMIDQGHQLQGLLLNSAIANSCTGEQGWQNALQEQAWLANKLNVAPNLIGVASTGLIGAQLPMDKIKNGLPQLTPTKSDAVTYAVLTTDQHPKTVCVQCELSGQLVTLTGFAKGSGMIHPKMATMLGFVTTDAQIDGPVLQDMLSTNVDQTFNQITVDGDTSTNDMVVTLANGLADNPSLQAGTTDYDIFNQALHYVLGQLAKQIAADGEGATKLVECNVVHAATTFDGQQIAKAIVGSNLVKAAIFGEDPNWGRIISTIGATDADIDVATVDIEMNGVLLVQQSLAVDFDMAAVQATLRDNQIMIDVDLHHGTASGQAWGCDLTYNYVKINASYHT.

T152, K178, T189, E275, N397, and T402 together coordinate substrate. The active-site Nucleophile is the T189.

It belongs to the ArgJ family. As to quaternary structure, heterotetramer of two alpha and two beta chains.

The protein localises to the cytoplasm. It carries out the reaction N(2)-acetyl-L-ornithine + L-glutamate = N-acetyl-L-glutamate + L-ornithine. The enzyme catalyses L-glutamate + acetyl-CoA = N-acetyl-L-glutamate + CoA + H(+). Its pathway is amino-acid biosynthesis; L-arginine biosynthesis; L-ornithine and N-acetyl-L-glutamate from L-glutamate and N(2)-acetyl-L-ornithine (cyclic): step 1/1. It participates in amino-acid biosynthesis; L-arginine biosynthesis; N(2)-acetyl-L-ornithine from L-glutamate: step 1/4. Catalyzes two activities which are involved in the cyclic version of arginine biosynthesis: the synthesis of N-acetylglutamate from glutamate and acetyl-CoA as the acetyl donor, and of ornithine by transacetylation between N(2)-acetylornithine and glutamate. This chain is Arginine biosynthesis bifunctional protein ArgJ, found in Lactiplantibacillus plantarum (strain ATCC BAA-793 / NCIMB 8826 / WCFS1) (Lactobacillus plantarum).